A 124-amino-acid polypeptide reads, in one-letter code: Small ribosomal subunit protein uS13 (124 aa).

Positions 95–124 (GLPVRGQRTKTNARTRKGPKRTIAGKKKAR) are disordered.

This sequence belongs to the universal ribosomal protein uS13 family. As to quaternary structure, part of the 30S ribosomal subunit. Forms a loose heterodimer with protein S19. Forms two bridges to the 50S subunit in the 70S ribosome.

Functionally, located at the top of the head of the 30S subunit, it contacts several helices of the 16S rRNA. In the 70S ribosome it contacts the 23S rRNA (bridge B1a) and protein L5 of the 50S subunit (bridge B1b), connecting the 2 subunits; these bridges are implicated in subunit movement. Contacts the tRNAs in the A and P-sites. This Mycobacterium marinum (strain ATCC BAA-535 / M) protein is Small ribosomal subunit protein uS13.